The sequence spans 680 residues: DNA-directed RNA polymerase subunit beta' (680 aa).

4 residues coordinate Zn(2+): cysteine 69, cysteine 71, cysteine 87, and cysteine 90. Aspartate 489, aspartate 491, and aspartate 493 together coordinate Mg(2+).

Belongs to the RNA polymerase beta' chain family. RpoC1 subfamily. In terms of assembly, in plastids the minimal PEP RNA polymerase catalytic core is composed of four subunits: alpha, beta, beta', and beta''. When a (nuclear-encoded) sigma factor is associated with the core the holoenzyme is formed, which can initiate transcription. Mg(2+) serves as cofactor. It depends on Zn(2+) as a cofactor.

It localises to the plastid. It is found in the chloroplast. It carries out the reaction RNA(n) + a ribonucleoside 5'-triphosphate = RNA(n+1) + diphosphate. In terms of biological role, DNA-dependent RNA polymerase catalyzes the transcription of DNA into RNA using the four ribonucleoside triphosphates as substrates. This chain is DNA-directed RNA polymerase subunit beta', found in Lobularia maritima (Sweet alyssum).